The sequence spans 51 residues: Large ribosomal subunit protein bL33 (51 aa).

The tract at residues 1 to 24 is disordered; sequence MREKIRLNSSAGTGHFYTTDKNKR.

It belongs to the bacterial ribosomal protein bL33 family.

The protein is Large ribosomal subunit protein bL33 of Cellvibrio japonicus (strain Ueda107) (Pseudomonas fluorescens subsp. cellulosa).